Reading from the N-terminus, the 346-residue chain is Phosphoribosylformylglycinamidine cyclo-ligase (346 aa).

This sequence belongs to the AIR synthase family.

Its subcellular location is the cytoplasm. It carries out the reaction 2-formamido-N(1)-(5-O-phospho-beta-D-ribosyl)acetamidine + ATP = 5-amino-1-(5-phospho-beta-D-ribosyl)imidazole + ADP + phosphate + H(+). The protein operates within purine metabolism; IMP biosynthesis via de novo pathway; 5-amino-1-(5-phospho-D-ribosyl)imidazole from N(2)-formyl-N(1)-(5-phospho-D-ribosyl)glycinamide: step 2/2. The polypeptide is Phosphoribosylformylglycinamidine cyclo-ligase (Photobacterium profundum (strain SS9)).